Here is a 285-residue protein sequence, read N- to C-terminus: 2-dehydro-3-deoxyphosphooctonate aldolase (285 aa).

Belongs to the KdsA family.

The protein localises to the cytoplasm. It carries out the reaction D-arabinose 5-phosphate + phosphoenolpyruvate + H2O = 3-deoxy-alpha-D-manno-2-octulosonate-8-phosphate + phosphate. Its pathway is carbohydrate biosynthesis; 3-deoxy-D-manno-octulosonate biosynthesis; 3-deoxy-D-manno-octulosonate from D-ribulose 5-phosphate: step 2/3. It participates in bacterial outer membrane biogenesis; lipopolysaccharide biosynthesis. In Acidovorax ebreus (strain TPSY) (Diaphorobacter sp. (strain TPSY)), this protein is 2-dehydro-3-deoxyphosphooctonate aldolase.